The following is a 225-amino-acid chain: Cbp/p300-interacting transactivator 2 (225 aa).

This sequence belongs to the CITED family.

It is found in the nucleus. In terms of biological role, transcriptional coactivator or corepressor of the p300/CBP-mediated transcription complex. May be involved in sex determination, early gonad development, left-right patterning during embryogenesis and differentiation of the adrenal cortex. The protein is Cbp/p300-interacting transactivator 2 (cited2) of Xenopus tropicalis (Western clawed frog).